A 176-amino-acid chain; its full sequence is Xanthine-guanine phosphoribosyltransferase (176 aa).

Residues 51 to 52 (RG), Arg88, and 111 to 119 (DDLVDSGKT) each bind 5-phospho-alpha-D-ribose 1-diphosphate. Arg88 provides a ligand contact to GMP. Asp112 is a binding site for Mg(2+). Guanine is bound by residues Asp115 and Ile158. Xanthine is bound by residues Asp115 and Ile158. GMP-binding positions include 115 to 119 (DSGKT) and 157 to 158 (WI).

This sequence belongs to the purine/pyrimidine phosphoribosyltransferase family. XGPT subfamily. As to quaternary structure, homotetramer. Mg(2+) serves as cofactor.

The protein resides in the cell inner membrane. The enzyme catalyses GMP + diphosphate = guanine + 5-phospho-alpha-D-ribose 1-diphosphate. It catalyses the reaction XMP + diphosphate = xanthine + 5-phospho-alpha-D-ribose 1-diphosphate. The catalysed reaction is IMP + diphosphate = hypoxanthine + 5-phospho-alpha-D-ribose 1-diphosphate. Its pathway is purine metabolism; GMP biosynthesis via salvage pathway; GMP from guanine: step 1/1. It participates in purine metabolism; XMP biosynthesis via salvage pathway; XMP from xanthine: step 1/1. Purine salvage pathway enzyme that catalyzes the transfer of the ribosyl-5-phosphate group from 5-phospho-alpha-D-ribose 1-diphosphate (PRPP) to the N9 position of the 6-oxopurines guanine and xanthine to form the corresponding ribonucleotides GMP (guanosine 5'-monophosphate) and XMP (xanthosine 5'-monophosphate), with the release of PPi. To a lesser extent, also acts on hypoxanthine. The polypeptide is Xanthine-guanine phosphoribosyltransferase (Ruegeria sp. (strain TM1040) (Silicibacter sp.)).